A 1110-amino-acid chain; its full sequence is cGMP-specific 3',5'-cyclic phosphodiesterase (1110 aa).

2 stretches are compositionally biased toward low complexity: residues 1-25 (MTDV…SSAS) and 35-55 (TSTA…ASGA). 3 disordered regions span residues 1 to 55 (MTDV…ASGA), 67 to 128 (ISNQ…QQDV), and 184 to 203 (ASPT…SASS). The span at 88 to 103 (APYPPVPAAKPKPTPT) shows a compositional bias: pro residues. The span at 192-203 (SPRSLSNSSASS) shows a compositional bias: low complexity. GAF domains follow at residues 233–385 (DIDV…GIGI) and 417–601 (NLEC…GLGI). A PDEase domain is found at 631 to 954 (SQDQTEKLTQ…RNWQDLAEKV (324 aa)). H707 (proton donor) is an active-site residue. Positions 711, 747, 748, and 858 each coordinate a divalent metal cation. 2 disordered regions span residues 997-1028 (AQHG…TGAL) and 1040-1110 (LYNS…CSLL). Basic and acidic residues-rich tracts occupy residues 1006–1015 (DDSHTPEHQR) and 1056–1068 (LESH…DDKS). The span at 1082–1097 (GRMSASSSTSSAGTVV) shows a compositional bias: low complexity. Residues 1100–1110 (SKKRSKLCSLL) are compositionally biased toward basic residues. C1107 bears the Cysteine methyl ester mark. C1107 carries the S-farnesyl cysteine lipid modification. Positions 1108–1110 (SLL) are cleaved as a propeptide — removed in mature form.

Belongs to the cyclic nucleotide phosphodiesterase family. Interacts with PrBP. A divalent metal cation serves as cofactor.

Its subcellular location is the cell membrane. It catalyses the reaction 3',5'-cyclic GMP + H2O = GMP + H(+). In terms of biological role, has a role regulating cGMP transport in Malpighian tubule principal cells. The protein is cGMP-specific 3',5'-cyclic phosphodiesterase of Drosophila pseudoobscura pseudoobscura (Fruit fly).